Reading from the N-terminus, the 296-residue chain is mRNA 3'-end-processing protein RNA15 (296 aa).

The RRM domain occupies 18 to 96 (RVVYLGSIPY…RFLKCGYSSN (79 aa)). Residues 99 to 140 (ISGVSQQQQQQYNNINGNNNNNGNNNNNSNGPDFQNSGNANF) form a disordered region. Positions 100 to 135 (SGVSQQQQQQYNNINGNNNNNGNNNNNSNGPDFQNS) are enriched in low complexity.

In terms of assembly, component of the CFIA complex, which is composed of RNA14, RNA15, PCF11 and CLP1. Interacts directly with RNA14. Interacts with polyadenylate-binding protein PAB1.

The protein localises to the nucleus. Functionally, RNA-binding component of the cleavage factor IA (CFIA) complex, which is involved in the endonucleolytic cleavage during polyadenylation-dependent pre-mRNA 3'-end formation and cooperates with the cleavage factor NAB4/CFIB and the cleavage and polyadenylation factor (CPF) complex. Binds to A-rich RNA sequence elements. The sequence is that of mRNA 3'-end-processing protein RNA15 (RNA15) from Saccharomyces cerevisiae (strain ATCC 204508 / S288c) (Baker's yeast).